Here is a 109-residue protein sequence, read N- to C-terminus: MEVSAILRGTRLSAQKGRLVADQIRGLRVEKALNILAFSPKKGAGIIKKVLESAIANAEHNEGADIDALKVKTIYVDQGSVLKRFTARAKGRGNRISKPTCHITVTVGD.

The protein belongs to the universal ribosomal protein uL22 family. As to quaternary structure, part of the 50S ribosomal subunit.

This protein binds specifically to 23S rRNA; its binding is stimulated by other ribosomal proteins, e.g. L4, L17, and L20. It is important during the early stages of 50S assembly. It makes multiple contacts with different domains of the 23S rRNA in the assembled 50S subunit and ribosome. Its function is as follows. The globular domain of the protein is located near the polypeptide exit tunnel on the outside of the subunit, while an extended beta-hairpin is found that lines the wall of the exit tunnel in the center of the 70S ribosome. This chain is Large ribosomal subunit protein uL22, found in Thiobacillus denitrificans (strain ATCC 25259 / T1).